Reading from the N-terminus, the 509-residue chain is Major envelope glycoprotein (509 aa).

Residues 1–17 form the signal peptide; it reads MVRTAVLILLLVRFSEP. Residues Asn34, Asn156, Asn194, Asn351, Asn381, and Asn423 are each glycosylated (N-linked (GlcNAc...) asparagine; by host). Ser479 carries O-palmitoyl serine; by host lipidation. The chain crosses the membrane as a helical span at residues 480–502; it reads FMLGHAFSFMLTVGVIIFLFCMV. N-linked (GlcNAc...) asparagine; by host glycosylation occurs at Asn504.

It belongs to the baculoviridae gp64 family. Post-translationally, palmitoylated.

Its subcellular location is the virion membrane. The protein localises to the host cell membrane. In terms of biological role, envelope phosphoglycoprotein which mediates the fusion of viral and host endosomal membranes leading to virus entry into the host cell. This is Major envelope glycoprotein (GP67) from Choristoneura fumiferana nuclear polyhedrosis virus (CfMNPV).